The sequence spans 233 residues: Outer membrane protein MIP (233 aa).

The signal sequence occupies residues 1 to 20; the sequence is MKMKLVTAAVMGLAMSTAMA. The region spanning 144–233 is the PPIase FKBP-type domain; that stretch reads SDTVTVEYTG…IHLISVKKSS (90 aa).

The protein belongs to the FKBP-type PPIase family.

It localises to the cell outer membrane. It catalyses the reaction [protein]-peptidylproline (omega=180) = [protein]-peptidylproline (omega=0). Functionally, essential virulence factor associated with macrophage infectivity. Exhibits PPIase activity. This is Outer membrane protein MIP (mip) from Legionella pneumophila (strain Corby).